The primary structure comprises 176 residues: Translation initiation factor IF-3 (176 aa).

This sequence belongs to the IF-3 family. As to quaternary structure, monomer.

Its subcellular location is the cytoplasm. In terms of biological role, IF-3 binds to the 30S ribosomal subunit and shifts the equilibrium between 70S ribosomes and their 50S and 30S subunits in favor of the free subunits, thus enhancing the availability of 30S subunits on which protein synthesis initiation begins. The chain is Translation initiation factor IF-3 from Streptococcus pyogenes serotype M18 (strain MGAS8232).